A 304-amino-acid chain; its full sequence is MLFSRFVLLAFGSVAAVSASSIYARGRGGSSTDQPVANPYNTKEISLAAGLVQQTYCDSTENGLKIGDSELLYTMGEGYARQRVNIYHSPSLGIAVAIEGTNLFSLNSDLHDAKFWQEDPNERYIQYYPKGTKLMHGFQQAYNDLMDDIFTAVKKYKKEKNEKRVTVIGHSLGAAMGLLCAMDIELRMDGGLYKTYLFGLPRLGNPTFASFVDQKIGDKFHSIINGRDWVPTVPPRALGYQHPSDYVWIYPGNSTSAKLYPGQENVHGILTVAREFNFDDHQGIYFHTQIGAVMGECPAQVGAH.

Residues 1-19 (MLFSRFVLLAFGSVAAVSA) form the signal peptide. O-linked (Man...) threonine glycosylation occurs at Thr32. Cys57 and Cys297 are joined by a disulfide. Catalysis depends on Ser171, which acts as the Nucleophile. Residue Asp228 is part of the active site. N-linked (GlcNAc...) asparagine glycosylation is present at Asn253. The active site involves His281.

This sequence belongs to the AB hydrolase superfamily. Lipase family. Class 3 subfamily.

It is found in the secreted. Its subcellular location is the cell wall. It catalyses the reaction a monoacylglycerol + H2O = glycerol + a fatty acid + H(+). The catalysed reaction is a diacylglycerol + H2O = a monoacylglycerol + a fatty acid + H(+). With respect to regulation, RHC 80267, a well-known inhibitor of diacylglycerol lipases from mammals, also acts as an inhibitor for LIP1/SMG1. In terms of biological role, secreted lipase involved in Dandruff and seborrheic dermatitis (D/SD) probably via lipase-mediated breakdown of sebaceous lipids and release of irritating free fatty acids. Shows activity against monoglyceride and diglyceride substrates, but not triglyceride substrates and does not exhibit regio-selective production of diacylglycerols. Able to hydrolyze diacylglycerols such as distearin, dilinolein, dipalmitoylglycerol and dipalmitolein. Cleaves oleic acid from 1,2 isomers of diolein on both the 1 and the 2 position of the glycerol backbone, resulting mainly in free fatty acids but no monoolein is detected. Shows activity on monoolein and liberates mostly free fatty acids, but can also perform the reverse reaction and produce diolein. The polypeptide is Secreted mono- and diacylglycerol lipase LIP1 (Malassezia globosa (strain ATCC MYA-4612 / CBS 7966) (Dandruff-associated fungus)).